A 157-amino-acid chain; its full sequence is Protein Smg homolog (157 aa).

Belongs to the Smg family.

In Colwellia psychrerythraea (strain 34H / ATCC BAA-681) (Vibrio psychroerythus), this protein is Protein Smg homolog.